We begin with the raw amino-acid sequence, 134 residues long: MPADLSGTWTLLSSDNFEGYMLALGIDFATRKIAKLLKPQKVIEQNGDSFTIHTNSSLRNYFVKFKVGEEFDEDNRGLDNRKCKSLVIWDNDRLTCIQKGEKKNRGWTHWIEGDKLHLEMFCEGQVCKQTFQRA.

This sequence belongs to the calycin superfamily. Fatty-acid binding protein (FABP) family. In terms of tissue distribution, expressed primarily in kidney, heart and transverse colon. Detected in adult lymph node, appendix, ascending colon, and in fetal heart and spleen.

Its subcellular location is the cytoplasm. Intracellular transport of retinol. This chain is Retinoid-binding protein 7 (RBP7), found in Homo sapiens (Human).